Reading from the N-terminus, the 166-residue chain is Large ribosomal subunit protein bL19 (166 aa).

The protein belongs to the bacterial ribosomal protein bL19 family. Part of the 50S ribosomal subunit. Forms a cluster with proteins L3 and L14.

In terms of biological role, this protein is located at the 30S-50S ribosomal subunit interface and may play a role in the structure and function of the aminoacyl-tRNA binding site. Binds the 23S rRNA. This Deinococcus radiodurans (strain ATCC 13939 / DSM 20539 / JCM 16871 / CCUG 27074 / LMG 4051 / NBRC 15346 / NCIMB 9279 / VKM B-1422 / R1) protein is Large ribosomal subunit protein bL19 (rplS).